A 144-amino-acid polypeptide reads, in one-letter code: HTH-type transcriptional regulator BilQ (144 aa).

Residues 1–134 form the HTH marR-type domain; sequence MEQTFAYYTT…LFTLLQKLGK (134 aa). The H-T-H motif DNA-binding region spans 48-71; that stretch reads QRELAAAVRADEGYAARSVEKLLQ.

Its function is as follows. Transcription regulator that regulates expression of the bilirubin reductase operon (bilQ, bilR and bilS). The protein is HTH-type transcriptional regulator BilQ of Clostridium symbiosum (strain WAL-14163).